We begin with the raw amino-acid sequence, 627 residues long: Putative polyketide hydroxylase (627 aa).

FAD is bound by residues 22-51 (PVLV…LVER) and 309-319 (YRSGRVLLAGD). The tract at residues 370 to 469 (AEATSARAAH…GGGPGGGGPQ (100 aa)) is disordered. Positions 395 to 469 (AGGGGPGAGT…GGGPGGGGPQ (75 aa)) are enriched in gly residues.

It belongs to the PheA/TfdB FAD monooxygenase family. FAD serves as cofactor.

Involved in developmentally regulated synthesis of a compound biosynthetically related to polyketide antibiotics which is essential for spore color in Streptococcus coelicolor. This is Putative polyketide hydroxylase from Streptomyces coelicolor (strain ATCC BAA-471 / A3(2) / M145).